Consider the following 415-residue polypeptide: Serine--tRNA ligase (415 aa).

L-serine is bound at residue 231–233; that stretch reads TAE. Residue 262-264 participates in ATP binding; sequence RSE. Residue E285 coordinates L-serine. Residue 349–352 participates in ATP binding; that stretch reads EISS. S383 lines the L-serine pocket.

Belongs to the class-II aminoacyl-tRNA synthetase family. Type-1 seryl-tRNA synthetase subfamily. In terms of assembly, homodimer. The tRNA molecule binds across the dimer.

The protein localises to the cytoplasm. The enzyme catalyses tRNA(Ser) + L-serine + ATP = L-seryl-tRNA(Ser) + AMP + diphosphate + H(+). It carries out the reaction tRNA(Sec) + L-serine + ATP = L-seryl-tRNA(Sec) + AMP + diphosphate + H(+). The protein operates within aminoacyl-tRNA biosynthesis; selenocysteinyl-tRNA(Sec) biosynthesis; L-seryl-tRNA(Sec) from L-serine and tRNA(Sec): step 1/1. Its function is as follows. Catalyzes the attachment of serine to tRNA(Ser). Is also able to aminoacylate tRNA(Sec) with serine, to form the misacylated tRNA L-seryl-tRNA(Sec), which will be further converted into selenocysteinyl-tRNA(Sec). The polypeptide is Serine--tRNA ligase (Helicobacter acinonychis (strain Sheeba)).